A 213-amino-acid polypeptide reads, in one-letter code: Large ribosomal subunit protein uL1 (213 aa).

This sequence belongs to the universal ribosomal protein uL1 family. In terms of assembly, part of the 50S ribosomal subunit.

Functionally, binds directly to 23S rRNA. Probably involved in E site tRNA release. Its function is as follows. Protein L1 is also a translational repressor protein, it controls the translation of its operon by binding to its mRNA. The sequence is that of Large ribosomal subunit protein uL1 from Methanococcus maripaludis (strain C6 / ATCC BAA-1332).